Consider the following 341-residue polypeptide: tRNA N6-adenosine threonylcarbamoyltransferase (341 aa).

Fe cation-binding residues include H115 and H119. Substrate-binding positions include 137–141, D170, G183, D187, and N276; that span reads IVSGG. D304 lines the Fe cation pocket.

Belongs to the KAE1 / TsaD family. It depends on Fe(2+) as a cofactor.

The protein localises to the cytoplasm. The catalysed reaction is L-threonylcarbamoyladenylate + adenosine(37) in tRNA = N(6)-L-threonylcarbamoyladenosine(37) in tRNA + AMP + H(+). Functionally, required for the formation of a threonylcarbamoyl group on adenosine at position 37 (t(6)A37) in tRNAs that read codons beginning with adenine. Is involved in the transfer of the threonylcarbamoyl moiety of threonylcarbamoyl-AMP (TC-AMP) to the N6 group of A37, together with TsaE and TsaB. TsaD likely plays a direct catalytic role in this reaction. The protein is tRNA N6-adenosine threonylcarbamoyltransferase of Staphylococcus aureus (strain bovine RF122 / ET3-1).